The chain runs to 144 residues: Transcription antitermination protein NusB (144 aa).

The protein belongs to the NusB family.

Its function is as follows. Involved in transcription antitermination. Required for transcription of ribosomal RNA (rRNA) genes. Binds specifically to the boxA antiterminator sequence of the ribosomal RNA (rrn) operons. In Streptococcus agalactiae serotype Ia (strain ATCC 27591 / A909 / CDC SS700), this protein is Transcription antitermination protein NusB.